The chain runs to 218 residues: Putative transposase InsD for insertion element IS2E (218 aa).

Residues 23-206 (KPAVPPSKRA…SPREYLRQRA (184 aa)) form the Integrase catalytic domain.

Functionally, involved in the transposition of the insertion sequence IS2. The chain is Putative transposase InsD for insertion element IS2E (insD8) from Escherichia coli (strain K12).